Here is a 162-residue protein sequence, read N- to C-terminus: Large ribosomal subunit protein uL30 (162 aa).

It belongs to the universal ribosomal protein uL30 family. Part of the 50S ribosomal subunit.

The polypeptide is Large ribosomal subunit protein uL30 (Staphylothermus marinus (strain ATCC 43588 / DSM 3639 / JCM 9404 / F1)).